The primary structure comprises 158 residues: Transcriptional repressor NrdR (158 aa).

A zinc finger lies at 3-34 (CPYCGYPDSKVIDSRPTDDNTSIRRRRECLKC). The 91-residue stretch at 49–139 (ILVIKKDNRR…VYRQFKDINT (91 aa)) folds into the ATP-cone domain.

It belongs to the NrdR family. Zn(2+) serves as cofactor.

Its function is as follows. Negatively regulates transcription of bacterial ribonucleotide reductase nrd genes and operons by binding to NrdR-boxes. This chain is Transcriptional repressor NrdR, found in Thermoanaerobacter pseudethanolicus (strain ATCC 33223 / 39E) (Clostridium thermohydrosulfuricum).